Consider the following 480-residue polypeptide: Proline--tRNA ligase (480 aa).

It belongs to the class-II aminoacyl-tRNA synthetase family. ProS type 3 subfamily. As to quaternary structure, homodimer.

It localises to the cytoplasm. The enzyme catalyses tRNA(Pro) + L-proline + ATP = L-prolyl-tRNA(Pro) + AMP + diphosphate. Catalyzes the attachment of proline to tRNA(Pro) in a two-step reaction: proline is first activated by ATP to form Pro-AMP and then transferred to the acceptor end of tRNA(Pro). This chain is Proline--tRNA ligase, found in Alkaliphilus oremlandii (strain OhILAs) (Clostridium oremlandii (strain OhILAs)).